The sequence spans 372 residues: tRNA pseudouridine synthase D (372 aa).

The active-site Nucleophile is the Asp-85. The region spanning 160-330 (GFTNYFGYQR…MQGSRRFMWG (171 aa)) is the TRUD domain.

It belongs to the pseudouridine synthase TruD family.

It carries out the reaction uridine(13) in tRNA = pseudouridine(13) in tRNA. Its function is as follows. Responsible for synthesis of pseudouridine from uracil-13 in transfer RNAs. The sequence is that of tRNA pseudouridine synthase D from Campylobacter jejuni (strain RM1221).